A 464-amino-acid chain; its full sequence is ATP synthase subunit beta 1 (464 aa).

153 to 160 (GGAGVGKT) is an ATP binding site.

The protein belongs to the ATPase alpha/beta chains family. In terms of assembly, F-type ATPases have 2 components, CF(1) - the catalytic core - and CF(0) - the membrane proton channel. CF(1) has five subunits: alpha(3), beta(3), gamma(1), delta(1), epsilon(1). CF(0) has three main subunits: a(1), b(2) and c(9-12). The alpha and beta chains form an alternating ring which encloses part of the gamma chain. CF(1) is attached to CF(0) by a central stalk formed by the gamma and epsilon chains, while a peripheral stalk is formed by the delta and b chains.

It localises to the cell inner membrane. It catalyses the reaction ATP + H2O + 4 H(+)(in) = ADP + phosphate + 5 H(+)(out). Produces ATP from ADP in the presence of a proton gradient across the membrane. The catalytic sites are hosted primarily by the beta subunits. The chain is ATP synthase subunit beta 1 from Burkholderia mallei (strain SAVP1).